Consider the following 512-residue polypeptide: N-acetyltryptophan 6-hydroxylase ivoC (512 aa).

A helical transmembrane segment spans residues 6 to 26; that stretch reads LVFSFPAWALLLVLTLLYTLY. N-linked (GlcNAc...) asparagine glycosylation is present at Asn-118. Cys-453 contacts heme.

It belongs to the cytochrome P450 family. Heme serves as cofactor.

Its subcellular location is the membrane. It participates in pigment biosynthesis. In terms of biological role, N-acetyltryptophan 6-hydroxylase; part of the pathway that mediates the biosynthesis of the gray-brown conidiophore pigment. The first step of the pathway is performed by the nonribosomal peptide synthetase ivoA that catalyzes ATP-dependent unidirectional stereoinversion of L-tryptophan to D-tryptophan with complete conversion. While the stereoinversion is catalyzed by the epimerization (E) domain of ivoA, the terminal condensation (C) domain stereoselectively hydrolyzes D-tryptophanyl-S-phosphopantetheine thioester and thus represents a non-canonical C domain function. D-tryptophan is acetylated, probably by an endogenous acetyltransferase. N-acetyltryptophan is further 6-hydroxylated into N-acetyl-6-hydroxytryptophan (AHT) by the cytochrome P450 monooxygenase ivoC. N-acetyl-6-hydroxytryptophan is substrate of the N-acetyl-6-hydroxytryptophan oxidase ivoB to produce the gray-brown conidiophore pigment. This Emericella nidulans (strain FGSC A4 / ATCC 38163 / CBS 112.46 / NRRL 194 / M139) (Aspergillus nidulans) protein is N-acetyltryptophan 6-hydroxylase ivoC.